We begin with the raw amino-acid sequence, 492 residues long: N-succinylglutamate 5-semialdehyde dehydrogenase (492 aa).

Residue 220-225 participates in NAD(+) binding; it reads GSASTG. Catalysis depends on residues Glu243 and Cys277.

This sequence belongs to the aldehyde dehydrogenase family. AstD subfamily.

The enzyme catalyses N-succinyl-L-glutamate 5-semialdehyde + NAD(+) + H2O = N-succinyl-L-glutamate + NADH + 2 H(+). It functions in the pathway amino-acid degradation; L-arginine degradation via AST pathway; L-glutamate and succinate from L-arginine: step 4/5. Catalyzes the NAD-dependent reduction of succinylglutamate semialdehyde into succinylglutamate. This Salmonella typhimurium (strain LT2 / SGSC1412 / ATCC 700720) protein is N-succinylglutamate 5-semialdehyde dehydrogenase.